The primary structure comprises 330 residues: Aspartate--ammonia ligase (330 aa).

This sequence belongs to the class-II aminoacyl-tRNA synthetase family. AsnA subfamily.

It is found in the cytoplasm. It carries out the reaction L-aspartate + NH4(+) + ATP = L-asparagine + AMP + diphosphate + H(+). The protein operates within amino-acid biosynthesis; L-asparagine biosynthesis; L-asparagine from L-aspartate (ammonia route): step 1/1. This is Aspartate--ammonia ligase from Klebsiella pneumoniae subsp. pneumoniae (strain ATCC 700721 / MGH 78578).